The chain runs to 275 residues: Large ribosomal subunit protein uL2 (275 aa).

Residues aspartate 35 to isoleucine 49 are compositionally biased toward polar residues. Disordered stretches follow at residues aspartate 35–lysine 59 and alanine 224–arginine 275. Over residues threonine 50 to lysine 59 the composition is skewed to basic residues.

It belongs to the universal ribosomal protein uL2 family. In terms of assembly, part of the 50S ribosomal subunit. Forms a bridge to the 30S subunit in the 70S ribosome.

One of the primary rRNA binding proteins. Required for association of the 30S and 50S subunits to form the 70S ribosome, for tRNA binding and peptide bond formation. It has been suggested to have peptidyltransferase activity; this is somewhat controversial. Makes several contacts with the 16S rRNA in the 70S ribosome. The protein is Large ribosomal subunit protein uL2 of Burkholderia orbicola (strain AU 1054).